The chain runs to 514 residues: Periplasmic [NiFeSe] hydrogenase large subunit (514 aa).

Glu-52 provides a ligand contact to Fe cation. Ni(2+)-binding residues include Cys-71 and Cys-74. Fe cation is bound by residues Cys-74 and Ile-445. Residues Sec-493 and Cys-496 each contribute to the Ni(2+) site. Position 493 (Sec-493) is a non-standard amino acid, selenocysteine. Fe cation contacts are provided by Cys-496 and His-499.

The protein belongs to the [NiFe]/[NiFeSe] hydrogenase large subunit family. In terms of assembly, heterodimer of a large and a small subunit. It depends on Fe cation as a cofactor. Requires Ni(2+) as cofactor.

Its subcellular location is the periplasm. It catalyses the reaction H2 + A = AH2. The protein is Periplasmic [NiFeSe] hydrogenase large subunit of Desulfomicrobium baculatum (Desulfovibrio baculatus).